The chain runs to 187 residues: Large ribosomal subunit protein bL17 (187 aa).

It belongs to the bacterial ribosomal protein bL17 family. Part of the 50S ribosomal subunit. Contacts protein L32.

The protein is Large ribosomal subunit protein bL17 of Rhodococcus opacus (strain B4).